The sequence spans 570 residues: Urease subunit alpha 1 (570 aa).

A Urease domain is found at 131 to 570 (GGIDTHVHFI…VPMAQRYFLF (440 aa)). Ni(2+) is bound by residues H136, H138, and K219. K219 is modified (N6-carboxylysine). A substrate-binding site is contributed by H221. H248 and H274 together coordinate Ni(2+). H322 (proton donor) is an active-site residue. D362 is a binding site for Ni(2+).

The protein belongs to the metallo-dependent hydrolases superfamily. Urease alpha subunit family. In terms of assembly, heterotrimer of UreA (gamma), UreB (beta) and UreC (alpha) subunits. Three heterotrimers associate to form the active enzyme. The cofactor is Ni cation. Carboxylation allows a single lysine to coordinate two nickel ions.

It is found in the cytoplasm. The enzyme catalyses urea + 2 H2O + H(+) = hydrogencarbonate + 2 NH4(+). It participates in nitrogen metabolism; urea degradation; CO(2) and NH(3) from urea (urease route): step 1/1. This is Urease subunit alpha 1 from Brucella melitensis biotype 1 (strain ATCC 23456 / CCUG 17765 / NCTC 10094 / 16M).